The sequence spans 384 residues: Soluble hydrogenase, small subunit (384 aa).

N6-(pyridoxal phosphate)lysine is present on Lys-194.

This sequence belongs to the class-V pyridoxal-phosphate-dependent aminotransferase family. Heterodimer of a large and a small subunit. The cofactor is pyridoxal 5'-phosphate.

It is found in the cytoplasm. Functionally, soluble hydrogenase catalyzes both production and consumption of hydrogen from suitable artificial electron donors or acceptors. This subunit catalyzes the tritium-exchange activity. In Synechococcus sp. (strain PCC 6716), this protein is Soluble hydrogenase, small subunit.